We begin with the raw amino-acid sequence, 212 residues long: Small ribosomal subunit protein uS5 (212 aa).

The segment at 1 to 42 (MPGRERRDGGRSADKNDNNKGRNDRGRNDRNNRRGRGRDDDR) is disordered. One can recognise an S5 DRBM domain in the interval 45 to 108 (YIERVVTINR…EEARKNFFRV (64 aa)).

Belongs to the universal ribosomal protein uS5 family. In terms of assembly, part of the 30S ribosomal subunit. Contacts proteins S4 and S8.

Functionally, with S4 and S12 plays an important role in translational accuracy. Its function is as follows. Located at the back of the 30S subunit body where it stabilizes the conformation of the head with respect to the body. The chain is Small ribosomal subunit protein uS5 from Corynebacterium kroppenstedtii (strain DSM 44385 / JCM 11950 / CIP 105744 / CCUG 35717).